Consider the following 174-residue polypeptide: RNA pyrophosphohydrolase (174 aa).

Residues 6-149 enclose the Nudix hydrolase domain; it reads GYRPNVGIIL…KRDVYLGALK (144 aa). A Nudix box motif is present at residues 38–59; the sequence is GGIKPGESPETAMYRELYEEVG.

The protein belongs to the Nudix hydrolase family. RppH subfamily. The cofactor is a divalent metal cation.

Functionally, accelerates the degradation of transcripts by removing pyrophosphate from the 5'-end of triphosphorylated RNA, leading to a more labile monophosphorylated state that can stimulate subsequent ribonuclease cleavage. The chain is RNA pyrophosphohydrolase from Neisseria meningitidis serogroup B (strain ATCC BAA-335 / MC58).